Here is a 180-residue protein sequence, read N- to C-terminus: Chromatin structure-remodeling complex protein RSC14 (180 aa).

Interacts with STH1, RSC3 and ARP9. Component of the two forms of the RSC complex composed of at least either RSC1 or RSC2, and ARP7, ARP9, LDB7, NPL6, RSC3, RSC30, RSC4, RSC58, RSC6, RSC8, RSC9, SFH1, STH1, HTL1 and probably RTT102. The complexes interact with histone and histone variant components of centromeric chromatin. Component of a fungal-specific module (HTL1-LDB7-NPL6-RSC3-RSC30) within the RSC complex.

Its subcellular location is the nucleus. Functionally, component of the chromatin structure-remodeling complex (RSC), which is involved in transcription regulation and nucleosome positioning. RSC is responsible for the transfer of a histone octamer from a nucleosome core particle to naked DNA. The reaction requires ATP and involves an activated RSC-nucleosome intermediate. Remodeling reaction also involves DNA translocation, DNA twist and conformational change. As a reconfigurer of centromeric and flanking nucleosomes, RSC complex is required both for proper kinetochore function in chromosome segregation and, via a PKC1-dependent signaling pathway, for organization of the cellular cytoskeleton. Together with HTL1, NPL6, RSC3, RSC30 components, defines a fungal-specific module within the RSC complex that plays a role in many cellular functions including the maintenance of cell wall integrity. May be involved in the transfer of mannosylphosphate (MP) groups into N-linked oligosaccharides. In Saccharomyces cerevisiae (strain ATCC 204508 / S288c) (Baker's yeast), this protein is Chromatin structure-remodeling complex protein RSC14 (LDB7).